The sequence spans 83 residues: MRLILSLPVLAVVLAMVLEGPAPAQAAPDISSAWESIPEKLEEFGRTVKEKVRTAIDHIKKSDFPEKTRKWFSEMFDTLKEKF.

Positions 1–26 (MRLILSLPVLAVVLAMVLEGPAPAQA) are cleaved as a signal peptide.

The protein belongs to the apolipoprotein C1 family.

The protein resides in the secreted. Functionally, inhibitor of lipoprotein binding to the low density lipoprotein (LDL) receptor, LDL receptor-related protein, and very low density lipoprotein (VLDL) receptor. Associates with high density lipoproteins (HDL) and the triacylglycerol-rich lipoproteins in the plasma and makes up about 10% of the protein of the VLDL and 2% of that of HDL. Appears to interfere directly with fatty acid uptake and is also the major plasma inhibitor of cholesteryl ester transfer protein (CETP). Binds free fatty acids and reduces their intracellular esterification. Modulates the interaction of APOE with beta-migrating VLDL and inhibits binding of beta-VLDL to the LDL receptor-related protein. The chain is Apolipoprotein C-I (APOC1) from Eonycteris spelaea (Lesser dawn bat).